The following is a 270-amino-acid chain: Glucosamine-6-phosphate deaminase (270 aa).

The active-site Proton acceptor; for enolization step is the aspartate 72. Aspartate 141 acts as the For ring-opening step in catalysis. Residue histidine 143 is the Proton acceptor; for ring-opening step of the active site. Glutamate 148 (for ring-opening step) is an active-site residue.

This sequence belongs to the glucosamine/galactosamine-6-phosphate isomerase family. NagB subfamily.

It carries out the reaction alpha-D-glucosamine 6-phosphate + H2O = beta-D-fructose 6-phosphate + NH4(+). It participates in amino-sugar metabolism; N-acetylneuraminate degradation; D-fructose 6-phosphate from N-acetylneuraminate: step 5/5. Its activity is regulated as follows. Allosterically activated by N-acetylglucosamine 6-phosphate (GlcNAc6P). Functionally, catalyzes the reversible isomerization-deamination of glucosamine 6-phosphate (GlcN6P) to form fructose 6-phosphate (Fru6P) and ammonium ion. The sequence is that of Glucosamine-6-phosphate deaminase from Treponema denticola (strain ATCC 35405 / DSM 14222 / CIP 103919 / JCM 8153 / KCTC 15104).